Reading from the N-terminus, the 458-residue chain is tRNA modification GTPase MnmE (458 aa).

Residues arginine 26, glutamate 88, and arginine 127 each contribute to the (6S)-5-formyl-5,6,7,8-tetrahydrofolate site. The TrmE-type G domain maps to 224–378; the sequence is GLSTAIIGRP…IEDRINQLFF (155 aa). Residue asparagine 234 coordinates K(+). GTP-binding positions include 234–239, 253–259, and 278–281; these read NVGKSS, TDIAGTT, and DTAG. Serine 238 is a Mg(2+) binding site. K(+)-binding residues include threonine 253, isoleucine 255, and threonine 258. Residue threonine 259 participates in Mg(2+) binding. A (6S)-5-formyl-5,6,7,8-tetrahydrofolate-binding site is contributed by lysine 458.

Belongs to the TRAFAC class TrmE-Era-EngA-EngB-Septin-like GTPase superfamily. TrmE GTPase family. Homodimer. Heterotetramer of two MnmE and two MnmG subunits. The cofactor is K(+).

It localises to the cytoplasm. Its function is as follows. Exhibits a very high intrinsic GTPase hydrolysis rate. Involved in the addition of a carboxymethylaminomethyl (cmnm) group at the wobble position (U34) of certain tRNAs, forming tRNA-cmnm(5)s(2)U34. This chain is tRNA modification GTPase MnmE, found in Streptococcus pyogenes serotype M1.